The sequence spans 350 residues: UDP-N-acetylenolpyruvoylglucosamine reductase (350 aa).

The FAD-binding PCMH-type domain maps to 24–195 (HVEATARWLL…VAVEFNLPLL (172 aa)). Arg-172 is a catalytic residue. Ser-245 acts as the Proton donor in catalysis. Glu-342 is a catalytic residue.

This sequence belongs to the MurB family. FAD serves as cofactor.

It is found in the cytoplasm. It catalyses the reaction UDP-N-acetyl-alpha-D-muramate + NADP(+) = UDP-N-acetyl-3-O-(1-carboxyvinyl)-alpha-D-glucosamine + NADPH + H(+). It functions in the pathway cell wall biogenesis; peptidoglycan biosynthesis. Cell wall formation. In Xanthomonas euvesicatoria pv. vesicatoria (strain 85-10) (Xanthomonas campestris pv. vesicatoria), this protein is UDP-N-acetylenolpyruvoylglucosamine reductase.